The primary structure comprises 699 residues: MINLNKHTAFKKTAKFFLGLSLLLSVIVPSFALQPATAEAADSYKIVGYYPSWAAYGRNYNVADIDPTKVTHINYAFADICWNGIHGNPDPSGPNPVTWTCQNEKSQTINVPNGTIVLGDPWIDTGKTFAGDTWDQPIAGNINQLNKLKQTNPNLKTIISVGGWTWSNRFSDVAATAATREVFANSAVDFLRKYNFDGVDLDWEYPVSGGLDGNSKRPEDKQNYTLLLSKIREKLDAAGAVDGKKYLLTIASGASATYAANTELAKIAAIVDWINIMTYDFNGAWQKISAHNAPLNYDPAASAAGVPDANTFNVAAGAQGHLDAGVPAAKLVLGVPFYGRGWDGCAQAGNGQYQTCTGGSSVGTWEAGSFDFYDLEANYINKNGYTRYWNDTAKVPYLYNASNKRFISYDDAESVGYKTAYIKSKGLGGAMFWELSGDRNKTLQNKLKADLPTGGTVPPVDTTAPSVPGNARSTGVTANSVTLAWNASTDNVGVTGYNVYNGANLATSVTGTTATISGLTAGTSYTFTIKAKDAAGNLSAASNAVTVSTTAQPGGDTQAPTAPTNLASTAQTTSSITLSWTASTDNVGVTGYDVYNGTALATTVTGTTATISGLAADTSYTFTVKAKDAAGNVSAASNAVSVKTAAETTNPGVSAWQVNTAYTAGQLVTYNGKTYKCLQPHTSLAGWEPSNVPALWQLQ.

The signal sequence occupies residues 1–41 (MINLNKHTAFKKTAKFFLGLSLLLSVIVPSFALQPATAEAA). A GH18 domain is found at 44 to 454 (YKIVGYYPSW…NKLKADLPTG (411 aa)). Residues 135 to 136 (DQ) and 162 to 165 (GGWT) contribute to the chitin site. The active-site Proton donor is the glutamate 204. Chitin-binding positions include tyrosine 205, 277-280 (MTYD), and tryptophan 433. The disordered stretch occupies residues 449–471 (ADLPTGGTVPPVDTTAPSVPGNA). Residues 452–465 (PTGGTVPPVDTTAP) show a composition bias toward low complexity. Fibronectin type-III domains follow at residues 467–553 (VPGN…TAQP) and 562–647 (APTN…TAAE).

It belongs to the glycosyl hydrolase 18 family. Chitinase class II subfamily.

The enzyme catalyses Random endo-hydrolysis of N-acetyl-beta-D-glucosaminide (1-&gt;4)-beta-linkages in chitin and chitodextrins.. This is Chitinase A1 (chiA1) from Niallia circulans (Bacillus circulans).